A 113-amino-acid polypeptide reads, in one-letter code: MEERAQHCLSRLLDNSALKQQELPIHRLYFTARRVLFVFFATGIFCLCMGIILILSARSTQEIEINYTRICANCAKLRENASNFDKECTCSIPFYLSGKMMVGEIQETRLTLH.

The Cytoplasmic segment spans residues 1–34; the sequence is MEERAQHCLSRLLDNSALKQQELPIHRLYFTARR. Residues 35 to 55 traverse the membrane as a helical segment; the sequence is VLFVFFATGIFCLCMGIILIL. Residues 56–113 lie on the Extracellular side of the membrane; sequence SARSTQEIEINYTRICANCAKLRENASNFDKECTCSIPFYLSGKMMVGEIQETRLTLH. N-linked (GlcNAc...) asparagine glycosylation occurs at asparagine 66.

It belongs to the CDC50/LEM3 family. Specifically expressed in testis.

The protein resides in the membrane. This Homo sapiens (Human) protein is Cell cycle control protein 50C.